The following is a 363-amino-acid chain: Aminomethyltransferase (363 aa).

The protein belongs to the GcvT family. As to quaternary structure, the glycine cleavage system is composed of four proteins: P, T, L and H.

The enzyme catalyses N(6)-[(R)-S(8)-aminomethyldihydrolipoyl]-L-lysyl-[protein] + (6S)-5,6,7,8-tetrahydrofolate = N(6)-[(R)-dihydrolipoyl]-L-lysyl-[protein] + (6R)-5,10-methylene-5,6,7,8-tetrahydrofolate + NH4(+). Its function is as follows. The glycine cleavage system catalyzes the degradation of glycine. The chain is Aminomethyltransferase from Thermotoga neapolitana (strain ATCC 49049 / DSM 4359 / NBRC 107923 / NS-E).